A 279-amino-acid polypeptide reads, in one-letter code: MTTRIDTKFAELKAEGRPALVTYFMGGDPDLETALKVMKALPKAGADVIELGMPFSDPMADGPAIQAAGLRALNAGQTLAKTLYMAAEFRKEDDTTPIVMMGYYNPIYVYGVERFLTDAKASGVDGLIVVDLPSEMDAELCIPAMKAGINFIRLTTPTTDDKRLPKVLHNSSGFVYYVSMNGITGAAIADTAKVGEAVRHIKKSTDLPICVGFGVKTPEQAAAIATHADGVVVGTAIVNAIAGELDEKGKVKGDPVAAATRLVHALAESVRATRLEAAQ.

Active-site proton acceptor residues include E50 and D61.

This sequence belongs to the TrpA family. In terms of assembly, tetramer of two alpha and two beta chains.

The enzyme catalyses (1S,2R)-1-C-(indol-3-yl)glycerol 3-phosphate + L-serine = D-glyceraldehyde 3-phosphate + L-tryptophan + H2O. The protein operates within amino-acid biosynthesis; L-tryptophan biosynthesis; L-tryptophan from chorismate: step 5/5. In terms of biological role, the alpha subunit is responsible for the aldol cleavage of indoleglycerol phosphate to indole and glyceraldehyde 3-phosphate. The sequence is that of Tryptophan synthase alpha chain from Brucella suis biovar 1 (strain 1330).